Consider the following 489-residue polypeptide: MIPVVALVGRPNVGKSTLFNRLTRTRDALVADYPGLTRDRKYGRAHLSGYEFIVVDTGGIDGTEEGIETRMAEQSLAAIEEADVVLFLTDARAGLTAADEAIAEHLRRREKTTFVVANKVDGIDADSACGEFWALGLGEVYQMAAAQGRGVTNMIEYALTPYAEAMGLTRDGEGEEEADERQYTEEEAEAEQQRLQDLPIKLAIIGKPNVGKSTLTNRILGEERVVVYDEPGTTRDSIYIPLERDGQEYVIIDTAGVRRRSKVHETVEKFSVIKTLKAVEDANVVLLVVDAREGIAEQDLGLLGFALNVGRALVIAVNKWDGIDQDVKERVKSELDRRLGFIDFARIHFISALHGTGVGHLFESVEEAYESATRRVSTSMLTRIMQMAQDDHQPPLVNGRRVKLKYAHAGGYNPPIVVIHGNQVKKLPDSYKRFMMNYYRRSLKVMGTPIQVRFQEGGNPFEGLNTKKLTVSQERRRKRMMSHIKDKKK.

EngA-type G domains lie at 3-166 (PVVA…AEAM) and 200-373 (IKLA…ESAT). Residues 9–16 (GRPNVGKS), 56–60 (DTGGI), 118–121 (NKVD), 206–213 (GKPNVGKS), 253–257 (DTAGV), and 318–321 (NKWD) contribute to the GTP site. The KH-like domain occupies 374–458 (RRVSTSMLTR…PIQVRFQEGG (85 aa)).

This sequence belongs to the TRAFAC class TrmE-Era-EngA-EngB-Septin-like GTPase superfamily. EngA (Der) GTPase family. In terms of assembly, associates with the 50S ribosomal subunit.

Its function is as follows. GTPase that plays an essential role in the late steps of ribosome biogenesis. The sequence is that of GTPase Der from Shewanella loihica (strain ATCC BAA-1088 / PV-4).